The following is a 280-amino-acid chain: Ribosomal RNA small subunit methyltransferase A (280 aa).

S-adenosyl-L-methionine contacts are provided by Leu-24, Gly-49, Glu-70, Asp-95, and Asn-118.

The protein belongs to the class I-like SAM-binding methyltransferase superfamily. rRNA adenine N(6)-methyltransferase family. RsmA subfamily.

The protein localises to the cytoplasm. It catalyses the reaction adenosine(1518)/adenosine(1519) in 16S rRNA + 4 S-adenosyl-L-methionine = N(6)-dimethyladenosine(1518)/N(6)-dimethyladenosine(1519) in 16S rRNA + 4 S-adenosyl-L-homocysteine + 4 H(+). Its function is as follows. Specifically dimethylates two adjacent adenosines (A1518 and A1519) in the loop of a conserved hairpin near the 3'-end of 16S rRNA in the 30S particle. May play a critical role in biogenesis of 30S subunits. This Syntrophus aciditrophicus (strain SB) protein is Ribosomal RNA small subunit methyltransferase A.